A 36-amino-acid polypeptide reads, in one-letter code: MAASFLPSILVPLVGLIFPAIAMTSLFIYIEKQEVN.

A helical membrane pass occupies residues 9–29 (ILVPLVGLIFPAIAMTSLFIY).

This sequence belongs to the PsaI family.

Its subcellular location is the plastid. The protein resides in the chloroplast thylakoid membrane. May help in the organization of the PsaL subunit. In Tupiella akineta (Green alga), this protein is Photosystem I reaction center subunit VIII.